The chain runs to 795 residues: Phenylalanine--tRNA ligase beta subunit (795 aa).

Residues 39-148 (ADEFHTVVVG…ADAPVGEDYR (110 aa)) form the tRNA-binding domain. Positions 401–476 (PKRDGITLRA…RVYGYNSIQA (76 aa)) constitute a B5 domain. Residues Asp454, Asp460, Glu463, and Glu464 each coordinate Mg(2+). The FDX-ACB domain occupies 701–794 (SRYPSIRRDL…LKSEFNATLR (94 aa)).

The protein belongs to the phenylalanyl-tRNA synthetase beta subunit family. Type 1 subfamily. In terms of assembly, tetramer of two alpha and two beta subunits. Requires Mg(2+) as cofactor.

It localises to the cytoplasm. It catalyses the reaction tRNA(Phe) + L-phenylalanine + ATP = L-phenylalanyl-tRNA(Phe) + AMP + diphosphate + H(+). The protein is Phenylalanine--tRNA ligase beta subunit of Idiomarina loihiensis (strain ATCC BAA-735 / DSM 15497 / L2-TR).